A 144-amino-acid chain; its full sequence is Galectin b (144 aa).

The 138-residue stretch at 1–138 folds into the Galectin domain; the sequence is DHIDLEFDVG…DAVLRKLCVV (138 aa).

Its function is as follows. Lectin that binds beta-galactoside and a wide array of complex carbohydrates. This is Galectin b from Aplysina lactuca (Marine sponge).